The primary structure comprises 116 residues: Protein Wnt-5a (116 aa).

Ser-1 carries O-palmitoleoyl serine; by PORCN lipidation. N-linked (GlcNAc...) asparagine glycosylation is found at Asn-69 and Asn-83. A disulfide bond links Cys-82 and Cys-97.

The protein belongs to the Wnt family. In terms of processing, palmitoleoylation is required for efficient binding to frizzled receptors. Depalmitoleoylation leads to Wnt signaling pathway inhibition.

It localises to the secreted. It is found in the extracellular space. The protein resides in the extracellular matrix. Its function is as follows. Ligand for members of the frizzled family of seven transmembrane receptors. Can activate or inhibit canonical Wnt signaling, depending on receptor context. Required during embryogenesis for extension of the primary anterior-posterior axis. This is Protein Wnt-5a (WNT5A) from Anser caerulescens (Snow goose).